Reading from the N-terminus, the 685-residue chain is Glycine--tRNA ligase beta subunit (685 aa).

Belongs to the class-II aminoacyl-tRNA synthetase family. In terms of assembly, tetramer of two alpha and two beta subunits.

The protein resides in the cytoplasm. It catalyses the reaction tRNA(Gly) + glycine + ATP = glycyl-tRNA(Gly) + AMP + diphosphate. In Leuconostoc mesenteroides subsp. mesenteroides (strain ATCC 8293 / DSM 20343 / BCRC 11652 / CCM 1803 / JCM 6124 / NCDO 523 / NBRC 100496 / NCIMB 8023 / NCTC 12954 / NRRL B-1118 / 37Y), this protein is Glycine--tRNA ligase beta subunit.